A 511-amino-acid polypeptide reads, in one-letter code: Zinc finger and BTB domain-containing protein 45 (511 aa).

Residues 33 to 96 (CDVTVRIREA…LYSGSLVVAQ (64 aa)) form the BTB domain. Residues 159–168 (ARPPGHPGAA) are compositionally biased toward low complexity. Disordered regions lie at residues 159-241 (ARPP…PDCA) and 294-403 (EDGA…PPTY). Acidic residues predominate over residues 206-224 (RGDEDDEESDDETDGEDGE). Positions 339–360 (PGPPAPPPSAPSGPAPAPPPAF) are enriched in pro residues. A compositionally biased stretch (low complexity) spans 378 to 397 (PAPSAAPTTAPSGTPARTPG). 4 C2H2-type zinc fingers span residues 403–425 (YECSHCRKTFSSRKNYTKHMFIH), 431–453 (HQCAVCWRSFSLRDYLLKHMVTH), 459–481 (FQCAVCAKRFTQKSSLNVHMRTH), and 486–508 (APCPACGKVFSHRALLERHLAAH).

This sequence belongs to the krueppel C2H2-type zinc-finger protein family.

Its subcellular location is the nucleus. In terms of biological role, may be involved in transcriptional regulation. In the central nervous system, may play a role in glial cell differentiation. The protein is Zinc finger and BTB domain-containing protein 45 (ZBTB45) of Homo sapiens (Human).